A 1353-amino-acid chain; its full sequence is DNA-directed RNA polymerase subunit beta' (1353 aa).

Positions 1–117 are unknown; it reads MSDNRLFTSV…AFQKLNDLFK (117 aa). The DNA-directed RNA polymerase subunit beta' stretch occupies residues 118 to 1353; the sequence is LYNHFPSISS…SELAEKTNQN (1236 aa). The Zn(2+) site is built by Cys-189, Cys-191, Cys-203, and Cys-206. Residues Asp-578, Asp-580, and Asp-582 each coordinate Mg(2+).

Belongs to the RNA polymerase beta' chain family. As to quaternary structure, the RNAP catalytic core consists of 2 alpha, 1 beta, 1 beta' and 1 omega subunit. When a sigma factor is associated with the core the holoenzyme is formed, which can initiate transcription. The cofactor is Mg(2+). Requires Zn(2+) as cofactor.

It catalyses the reaction RNA(n) + a ribonucleoside 5'-triphosphate = RNA(n+1) + diphosphate. Its function is as follows. DNA-dependent RNA polymerase catalyzes the transcription of DNA into RNA using the four ribonucleoside triphosphates as substrates. The sequence is that of DNA-directed RNA polymerase subunit beta' from Onion yellows phytoplasma (strain OY-M).